We begin with the raw amino-acid sequence, 317 residues long: 1D-myo-inositol 2-acetamido-2-deoxy-alpha-D-glucopyranoside deacetylase (317 aa).

Zn(2+) is bound by residues histidine 15, aspartate 18, and histidine 154. The interval 289–317 is disordered; sequence QDLDNRNPNSQPPADQAREDHLLTGLGFA.

It belongs to the MshB deacetylase family. Zn(2+) is required as a cofactor.

The enzyme catalyses 1D-myo-inositol 2-acetamido-2-deoxy-alpha-D-glucopyranoside + H2O = 1D-myo-inositol 2-amino-2-deoxy-alpha-D-glucopyranoside + acetate. In terms of biological role, catalyzes the deacetylation of 1D-myo-inositol 2-acetamido-2-deoxy-alpha-D-glucopyranoside (GlcNAc-Ins) in the mycothiol biosynthesis pathway. This Segniliparus rotundus (strain ATCC BAA-972 / CDC 1076 / CIP 108378 / DSM 44985 / JCM 13578) protein is 1D-myo-inositol 2-acetamido-2-deoxy-alpha-D-glucopyranoside deacetylase.